A 127-amino-acid chain; its full sequence is Large-conductance mechanosensitive channel (127 aa).

A run of 2 helical transmembrane segments spans residues 14 to 34 (VLDLAVGVIIGGAFTGLVKSL) and 69 to 89 (GAFLNDVINFLITAFVVFLIV).

It belongs to the MscL family. In terms of assembly, homopentamer.

The protein resides in the cell membrane. Functionally, channel that opens in response to stretch forces in the membrane lipid bilayer. May participate in the regulation of osmotic pressure changes within the cell. The sequence is that of Large-conductance mechanosensitive channel from Leuconostoc mesenteroides subsp. mesenteroides (strain ATCC 8293 / DSM 20343 / BCRC 11652 / CCM 1803 / JCM 6124 / NCDO 523 / NBRC 100496 / NCIMB 8023 / NCTC 12954 / NRRL B-1118 / 37Y).